The chain runs to 351 residues: 2-Hydroxyacid oxidase 2 (351 aa).

Positions 2-351 (SLVCLTDFQA…NRNLVQFSRL (350 aa)) constitute an FMN hydroxy acid dehydrogenase domain. FMN-binding positions include 77–79 (PTG), S106, and Q128. An a 2-oxocarboxylate-binding site is contributed by Y130. Residue T156 coordinates FMN. R165 is an a 2-oxocarboxylate binding site. Phosphothreonine is present on T178. Position 222 (K222) interacts with FMN. The Proton acceptor role is filled by H246. R249 contacts a 2-oxocarboxylate. Residues 277 to 281 (DGGVR) and 300 to 301 (GR) each bind FMN. The Microbody targeting signal motif lies at 349 to 351 (SRL).

It belongs to the FMN-dependent alpha-hydroxy acid dehydrogenase family. In terms of assembly, homotetramer. The cofactor is FMN. Expressed in the liver and kidney.

It localises to the peroxisome. It catalyses the reaction a (2S)-2-hydroxycarboxylate + O2 = a 2-oxocarboxylate + H2O2. The enzyme catalyses 2-hydroxyhexadecanoate + O2 = 2-oxohexadecanoate + H2O2. The catalysed reaction is 2-hydroxyoctanoate + O2 = 2-oxooctanoate + H2O2. It participates in lipid metabolism; fatty acid metabolism. Oxidase that catalyzes the oxidation of medium and long chain hydroxyacids such as 2-hydroxyhexadecanoate and 2-hydroxyoctanoate, to the correspondong 2-oxoacids. Its role in the oxidation of 2-hydroxy fatty acids may contribute to the general pathway of fatty acid alpha-oxidation. Active in vitro with the artificial electron acceptor 2,6-dichlorophenolindophenol (DCIP), but O2 is believed to be the physiological electron acceptor, leading to the production of H2O2. Is not active on glycolate, glyoxylate, L-lactate and 2-hydroxybutanoate. This is 2-Hydroxyacid oxidase 2 (HAO2) from Homo sapiens (Human).